The primary structure comprises 221 residues: Small ribosomal subunit protein uS2 (221 aa).

The protein belongs to the universal ribosomal protein uS2 family.

This is Small ribosomal subunit protein uS2 from Methanococcus maripaludis (strain C6 / ATCC BAA-1332).